Here is a 308-residue protein sequence, read N- to C-terminus: MPKQCRHLLQTSDLSMDEIKLLLKKASVYANDFNAVSLEVKEKIHNKIIVALFFENSTRTVSSFEIASLRLGAKMVKLNMQTSSTSKGETLIDTFKNIHAMQPDAIIMRHAFSSAPFKLVEFSQCPLINAGSGTSAHPTQALLDLLTLYQHFGSLENLKGKKIAFIGDVKNSRVANSNIKLLQRLGLEIMLCAPSSMLPSTPLIKTTHHIGEAIEFADILMSLRTQTERHNTPIFASLKDYANAYCITQKRLYDHAKNKEVVILHPGPVHRDIDIESTMLEDRRSKVLEQVKNGVAMRMAVLEFLLVD.

Residues R59 and T60 each contribute to the carbamoyl phosphate site. K87 contacts L-aspartate. Residues R109, H137, and Q140 each coordinate carbamoyl phosphate. Positions 173 and 224 each coordinate L-aspartate. The carbamoyl phosphate site is built by G267 and P268.

The protein belongs to the aspartate/ornithine carbamoyltransferase superfamily. ATCase family. Heterododecamer (2C3:3R2) of six catalytic PyrB chains organized as two trimers (C3), and six regulatory PyrI chains organized as three dimers (R2).

It carries out the reaction carbamoyl phosphate + L-aspartate = N-carbamoyl-L-aspartate + phosphate + H(+). It functions in the pathway pyrimidine metabolism; UMP biosynthesis via de novo pathway; (S)-dihydroorotate from bicarbonate: step 2/3. Its function is as follows. Catalyzes the condensation of carbamoyl phosphate and aspartate to form carbamoyl aspartate and inorganic phosphate, the committed step in the de novo pyrimidine nucleotide biosynthesis pathway. The chain is Aspartate carbamoyltransferase catalytic subunit from Helicobacter acinonychis (strain Sheeba).